A 256-amino-acid polypeptide reads, in one-letter code: NAD-dependent protein deacylase 4 (256 aa).

A Deacetylase sirtuin-type domain is found at 1–250; that stretch reads MRLPAEALKD…AKIHESLSTG (250 aa). 19-39 contributes to the NAD(+) binding site; the sequence is GAGISAESGILTYLDQMPKLW. Y64 and R67 together coordinate substrate. 98-101 is a binding site for NAD(+); the sequence is QNVD. H116 (proton acceptor) is an active-site residue. The Zn(2+) site is built by C124, C127, C152, and C155. Residues 192 to 194, 218 to 220, and A236 contribute to the NAD(+) site; these read GTS and NTV.

It belongs to the sirtuin family. Class III subfamily. Zn(2+) is required as a cofactor.

The protein localises to the cytoplasm. It carries out the reaction N(6)-acetyl-L-lysyl-[protein] + NAD(+) + H2O = 2''-O-acetyl-ADP-D-ribose + nicotinamide + L-lysyl-[protein]. It catalyses the reaction N(6)-succinyl-L-lysyl-[protein] + NAD(+) + H2O = 2''-O-succinyl-ADP-D-ribose + nicotinamide + L-lysyl-[protein]. Its function is as follows. NAD-dependent lysine deacetylase and desuccinylase that specifically removes acetyl and succinyl groups on target proteins. Modulates the activities of several proteins which are inactive in their acylated form. The chain is NAD-dependent protein deacylase 4 from Pseudomonas syringae pv. tomato (strain ATCC BAA-871 / DC3000).